Here is a 288-residue protein sequence, read N- to C-terminus: Diaminopimelate epimerase (288 aa).

Residues asparagine 17, glutamine 47, and asparagine 67 each contribute to the substrate site. Cysteine 76 acts as the Proton donor in catalysis. Residues 77–78, asparagine 163, asparagine 196, and 214–215 contribute to the substrate site; these read GN and ER. Cysteine 223 serves as the catalytic Proton acceptor. Position 224–225 (224–225) interacts with substrate; the sequence is GS.

It belongs to the diaminopimelate epimerase family. Homodimer.

Its subcellular location is the cytoplasm. The catalysed reaction is (2S,6S)-2,6-diaminopimelate = meso-2,6-diaminopimelate. The protein operates within amino-acid biosynthesis; L-lysine biosynthesis via DAP pathway; DL-2,6-diaminopimelate from LL-2,6-diaminopimelate: step 1/1. Its function is as follows. Catalyzes the stereoinversion of LL-2,6-diaminopimelate (L,L-DAP) to meso-diaminopimelate (meso-DAP), a precursor of L-lysine and an essential component of the bacterial peptidoglycan. This Rhodopseudomonas palustris (strain BisB18) protein is Diaminopimelate epimerase.